The sequence spans 303 residues: N-acetyl-D-glucosamine kinase (303 aa).

ATP contacts are provided by residues 4 to 11 (GFDIGGTK) and 133 to 140 (GVGGGLVL). Zn(2+)-binding residues include H157, C177, C179, and C184.

It belongs to the ROK (NagC/XylR) family. NagK subfamily.

It catalyses the reaction N-acetyl-D-glucosamine + ATP = N-acetyl-D-glucosamine 6-phosphate + ADP + H(+). The protein operates within cell wall biogenesis; peptidoglycan recycling. In terms of biological role, catalyzes the phosphorylation of N-acetyl-D-glucosamine (GlcNAc) derived from cell-wall degradation, yielding GlcNAc-6-P. The polypeptide is N-acetyl-D-glucosamine kinase (Citrobacter koseri (strain ATCC BAA-895 / CDC 4225-83 / SGSC4696)).